Consider the following 38-residue polypeptide: Cytochrome b559 subunit beta (38 aa).

A helical membrane pass occupies residues 13 to 29; the sequence is WLAVHALAVPTVFFLGS. His17 lines the heme pocket.

It belongs to the PsbE/PsbF family. In terms of assembly, heterodimer of an alpha subunit and a beta subunit. PSII is composed of 1 copy each of membrane proteins PsbA, PsbB, PsbC, PsbD, PsbE, PsbF, PsbH, PsbI, PsbJ, PsbK, PsbL, PsbM, PsbT, PsbX, PsbY, PsbZ, Psb30/Ycf12, at least 3 peripheral proteins of the oxygen-evolving complex and a large number of cofactors. It forms dimeric complexes. The cofactor is heme b.

The protein resides in the plastid. Its subcellular location is the chloroplast thylakoid membrane. In terms of biological role, this b-type cytochrome is tightly associated with the reaction center of photosystem II (PSII). PSII is a light-driven water:plastoquinone oxidoreductase that uses light energy to abstract electrons from H(2)O, generating O(2) and a proton gradient subsequently used for ATP formation. It consists of a core antenna complex that captures photons, and an electron transfer chain that converts photonic excitation into a charge separation. This chain is Cytochrome b559 subunit beta, found in Ostreococcus tauri.